Consider the following 447-residue polypeptide: Cysteine--tRNA ligase (447 aa).

Residue Cys-28 coordinates Zn(2+). Positions 30 to 40 (PTVYNYIHVGN) match the 'HIGH' region motif. The Zn(2+) site is built by Cys-211, His-236, and Glu-240. The 'KMSKS' region motif lies at 268 to 272 (KMSKS). Residue Lys-271 participates in ATP binding.

Belongs to the class-I aminoacyl-tRNA synthetase family. In terms of assembly, monomer. It depends on Zn(2+) as a cofactor.

The protein localises to the cytoplasm. The catalysed reaction is tRNA(Cys) + L-cysteine + ATP = L-cysteinyl-tRNA(Cys) + AMP + diphosphate. This is Cysteine--tRNA ligase from Streptococcus pneumoniae serotype 4 (strain ATCC BAA-334 / TIGR4).